The following is a 130-amino-acid chain: Large ribosomal subunit protein eL34 (130 aa).

Residues 111-130 form a disordered region; sequence KPVSKPPKIQKTAKAASKSK.

It belongs to the eukaryotic ribosomal protein eL34 family.

This is Large ribosomal subunit protein eL34 (RpL34) from Aedes albopictus (Asian tiger mosquito).